Reading from the N-terminus, the 117-residue chain is Hemerythrin subunit beta (117 aa).

7 residues coordinate Fe cation: His-24, His-53, Glu-57, His-72, His-76, His-105, and Asp-110.

It belongs to the hemerythrin family. Octamer composed of two types of chains: alpha and beta.

Hemerythrin is a respiratory protein in blood cells of certain marine worms. The oxygen-binding site in each chain contains two iron atoms. In Lingula anatina (Brachiopod), this protein is Hemerythrin subunit beta.